The following is a 131-amino-acid chain: MAAAANLPAFLAVGAGAALGAWLRWALGLLLNPIFLTIPFGTLAANLLGGLLMGASLAWIHAVPAMSPVLKLLLTTGFLGGLTTFSTFSAEGLHLVQRGEWGWLALHAAVHVAGSLLMAWIGYAAFTAWRG.

Transmembrane regions (helical) follow at residues 3-23, 34-54, and 62-82; these read AAAN…GAWL, IFLT…LLMG, and AVPA…LGGL. Residues Gly80 and Thr83 each coordinate Na(+). Residues 101–121 traverse the membrane as a helical segment; that stretch reads WGWLALHAAVHVAGSLLMAWI.

The protein belongs to the fluoride channel Fluc/FEX (TC 1.A.43) family.

It is found in the cell inner membrane. It catalyses the reaction fluoride(in) = fluoride(out). Its activity is regulated as follows. Na(+) is not transported, but it plays an essential structural role and its presence is essential for fluoride channel function. Functionally, fluoride-specific ion channel. Important for reducing fluoride concentration in the cell, thus reducing its toxicity. This chain is Fluoride-specific ion channel FluC, found in Aromatoleum aromaticum (strain DSM 19018 / LMG 30748 / EbN1) (Azoarcus sp. (strain EbN1)).